A 733-amino-acid polypeptide reads, in one-letter code: Phosphoribosylformylglycinamidine synthase subunit PurL (733 aa).

The active site involves H41. ATP is bound by residues Y44 and K83. A Mg(2+)-binding site is contributed by E85. Residues 86 to 89 (SHNH) and R108 contribute to the substrate site. Catalysis depends on H87, which acts as the Proton acceptor. Residue D109 participates in Mg(2+) binding. The interval 212–232 (GASFASQELSEESEEKRPSVQ) is disordered. Position 232 (Q232) interacts with substrate. D260 lines the Mg(2+) pocket. Residue 304-306 (ESQ) participates in substrate binding. ATP is bound by residues D488 and G525. Mg(2+) is bound at residue N526. S528 lines the substrate pocket.

This sequence belongs to the FGAMS family. As to quaternary structure, monomer. Part of the FGAM synthase complex composed of 1 PurL, 1 PurQ and 2 PurS subunits.

Its subcellular location is the cytoplasm. The enzyme catalyses N(2)-formyl-N(1)-(5-phospho-beta-D-ribosyl)glycinamide + L-glutamine + ATP + H2O = 2-formamido-N(1)-(5-O-phospho-beta-D-ribosyl)acetamidine + L-glutamate + ADP + phosphate + H(+). Its pathway is purine metabolism; IMP biosynthesis via de novo pathway; 5-amino-1-(5-phospho-D-ribosyl)imidazole from N(2)-formyl-N(1)-(5-phospho-D-ribosyl)glycinamide: step 1/2. In terms of biological role, part of the phosphoribosylformylglycinamidine synthase complex involved in the purines biosynthetic pathway. Catalyzes the ATP-dependent conversion of formylglycinamide ribonucleotide (FGAR) and glutamine to yield formylglycinamidine ribonucleotide (FGAM) and glutamate. The FGAM synthase complex is composed of three subunits. PurQ produces an ammonia molecule by converting glutamine to glutamate. PurL transfers the ammonia molecule to FGAR to form FGAM in an ATP-dependent manner. PurS interacts with PurQ and PurL and is thought to assist in the transfer of the ammonia molecule from PurQ to PurL. The polypeptide is Phosphoribosylformylglycinamidine synthase subunit PurL (Thermoanaerobacter sp. (strain X514)).